A 610-amino-acid polypeptide reads, in one-letter code: Menin (610 aa).

The tract at residues 214–390 is interaction with FANCD2; the sequence is GVAERSWLYL…SLLEAGEERP (177 aa). 2 disordered regions span residues 385–404 and 460–552; these read AGEE…GSAL and REAE…PVLT. The span at 393-402 shows a compositional bias: low complexity; it reads QTQGTQSQGS. Basic and acidic residues predominate over residues 484–500; that stretch reads RRESKPEEPPPPKKPAL. A Phosphoserine modification is found at serine 487. 2 stretches are compositionally biased toward pro residues: residues 512–521 and 537–548; these read PGPPRKPPGT and VPAPAASPPPEG. Serine 543 is modified (phosphoserine). Residue threonine 594 is modified to Phosphothreonine.

In terms of assembly, component of the MLL-HCF complex, at least composed of KMT2A/MLL1, MEN1, ASH2L, RBBP5, DPY30, WDR5, HCFC1 and HCFC2. Component of the menin-associated histone methyltransferase complex, at least composed of KMT2B/MLL4, MEN1, ASH2L, RBBP5, DPY30 and WDR5. Interacts with POLR2B. Interacts with POLR2A phosphorylated at 'Ser-5', but not with the unphosphorylated, nor 'Ser-2' phosphorylated POLR2A forms. Interacts with FANCD2 and DBF4. Interacts with SMAD3, but not with SMAD2, nor SMAD4. Directly interacts with NFKB1, NFKB2 and RELA. Interacts with JUND (via MBM motif); inhibits the interaction of JUND with MAPK10 and the phosphorylation of JUND by MAP kinases MAPK8 and MAPK10. Interacts with KMT2A (via MBM motif). The KMT2A-MEN1 complex interacts with PSIP1 with a greater affinity as MEN1 enhances interaction of KMT2A with PSIP1.

It is found in the nucleus. In terms of biological role, essential component of a MLL/SET1 histone methyltransferase (HMT) complex, a complex that specifically methylates 'Lys-4' of histone H3 (H3K4). Functions as a transcriptional regulator. Binds to the TERT promoter and represses telomerase expression. Plays a role in TGFB1-mediated inhibition of cell-proliferation, possibly regulating SMAD3 transcriptional activity. Represses JUND-mediated transcriptional activation on AP1 sites, as well as that mediated by NFKB subunit RELA. Positively regulates HOXC8 and HOXC6 gene expression. May be involved in normal hematopoiesis through the activation of HOXA9 expression. May be involved in DNA repair. The chain is Menin (MEN1) from Bos taurus (Bovine).